Here is a 116-residue protein sequence, read N- to C-terminus: Insulin (116 aa).

The N-terminal stretch at 1–24 (MAALWLQSFSLLVLLVVSWPGSQA) is a signal peptide. Disulfide bonds link Cys32/Cys102, Cys44/Cys115, and Cys101/Cys106. The propeptide at 56-93 (DVDQLLGFLPPKSGGAAAAGADNEVAEFAFKDQMEMMV) is c peptide.

The protein belongs to the insulin family. As to quaternary structure, heterodimer of a B chain and an A chain linked by two disulfide bonds.

Its subcellular location is the secreted. Its function is as follows. Insulin decreases blood glucose concentration. It increases cell permeability to monosaccharides, amino acids and fatty acids. It accelerates glycolysis, the pentose phosphate cycle, and glycogen synthesis in liver. The polypeptide is Insulin (ins) (Lophius americanus (American angler)).